The chain runs to 1047 residues: Atrial natriuretic peptide receptor 2 (1047 aa).

The N-terminal stretch at 1–16 is a signal peptide; sequence MALPSLLLVVAALAGG. Residues 17-458 lie on the Extracellular side of the membrane; that stretch reads VRPPGARNLT…DKTPLSTLAI (442 aa). N-linked (GlcNAc...) asparagine glycans are attached at residues N24 and N35. An intrachain disulfide couples C75 to C101. N-linked (GlcNAc...) asparagine glycans are attached at residues N161, N195, N244, N277, and N349. A helical transmembrane segment spans residues 459–478; the sequence is VALGTGVTFIMFGVSSFLIF. Residues 479–1047 are Cytoplasmic-facing; sequence RKLMLEKELA…GEQKGPPGLL (569 aa). The residue at position 513 (S513) is a Phosphoserine. One can recognise a Protein kinase domain in the interval 513–786; that stretch reads SRLTLSLRGS…PDFGQIKGFI (274 aa). Position 516 is a phosphothreonine (T516). Phosphoserine is present on residues S518, S522, S523, and S526. T529 bears the Phosphothreonine mark. In terms of domain architecture, Guanylate cyclase spans 861 to 991; it reads TIYFSDIVGF…DTVNTASRME (131 aa).

It belongs to the adenylyl cyclase class-4/guanylyl cyclase family. Phosphorylated. Phosphorylation of the protein kinase-like domain is required for full activation by CNP. In terms of processing, glycosylated. Widely expressed. Expressed in the columnar proliferating and prehypertrophic chondrocyte layers of the tibia.

It localises to the cell membrane. The enzyme catalyses GTP = 3',5'-cyclic GMP + diphosphate. Receptor for the C-type natriuretic peptide NPPC/CNP hormone. Has guanylate cyclase activity upon binding of its ligand. May play a role in the regulation of skeletal growth. In Mus musculus (Mouse), this protein is Atrial natriuretic peptide receptor 2 (Npr2).